The following is a 110-amino-acid chain: Toxin HigB-2 (110 aa).

In terms of biological role, toxic component of a type II toxin-antitoxin (TA) system. Inhibits translation by cleavage of mRNA. The chain is Toxin HigB-2 (higB-2) from Vibrio cholerae serotype O1 (strain ATCC 39315 / El Tor Inaba N16961).